Consider the following 296-residue polypeptide: Glycine--tRNA ligase alpha subunit (296 aa).

Belongs to the class-II aminoacyl-tRNA synthetase family. Tetramer of two alpha and two beta subunits.

The protein resides in the cytoplasm. It catalyses the reaction tRNA(Gly) + glycine + ATP = glycyl-tRNA(Gly) + AMP + diphosphate. This is Glycine--tRNA ligase alpha subunit from Listeria monocytogenes serotype 4a (strain HCC23).